The chain runs to 464 residues: Propanal dehydrogenase (CoA-propanoylating) (464 aa).

Residues 1 to 18 (MNTSELETLIRTILSEQL) form a targets protein to the BMC region.

The protein belongs to the EutE/PduP family. In terms of assembly, interacts with BMC shell proteins PduA and PduJ, which target this protein to BMC. Interacts with PduQ, probably via the N-terminus of PduQ. Interacts with PduK, probably with its BMC-containing N-terminus.

The protein resides in the bacterial microcompartment. It carries out the reaction propanal + NAD(+) + CoA = propanoyl-CoA + NADH + H(+). It functions in the pathway polyol metabolism; 1,2-propanediol degradation. Its function is as follows. A CoA-acylating aldehyde dehydrogenase required for optimal 1,2-propanediol (1,2-PD) degradation. Optimizes growth in the bacterial microcompartment (BMC) dedicated to 1,2-PD degradation by minimizing propionaldehyde toxicity. Directly targeted to the BMC. NAD(+) and NADH are regenerated internally within the Pdu BMC by the PduP and PduQ enzymes, which reduce NAD(+) and oxidize NADH respectively, although there must also be cofactor transport across the BMC. Functionally, the 1,2-PD-specific bacterial microcompartment (BMC) concentrates low levels of 1,2-PD catabolic enzymes, concentrates volatile reaction intermediates thus enhancing pathway flux and keeps the level of toxic, mutagenic propionaldehyde low. The sequence is that of Propanal dehydrogenase (CoA-propanoylating) from Salmonella typhimurium (strain LT2 / SGSC1412 / ATCC 700720).